The primary structure comprises 456 residues: Esterase MT1326 (456 aa).

3 LysM domains span residues S3–M50, T54–M101, and T105–I152. Residues S294, D391, and H425 contribute to the active site.

This sequence belongs to the AB hydrolase superfamily.

Its subcellular location is the secreted. It is found in the cell wall. The catalysed reaction is a fatty acid ester + H2O = an aliphatic alcohol + a fatty acid + H(+). Exhibits lipolytic activity with medium chain length esters as optimum substrates. The protein is Esterase MT1326 of Mycobacterium tuberculosis (strain CDC 1551 / Oshkosh).